Here is a 469-residue protein sequence, read N- to C-terminus: UDP-N-acetylmuramate--L-alanine ligase (469 aa).

ATP is bound at residue 122 to 128 (GTHGKTT).

The protein belongs to the MurCDEF family.

Its subcellular location is the cytoplasm. It carries out the reaction UDP-N-acetyl-alpha-D-muramate + L-alanine + ATP = UDP-N-acetyl-alpha-D-muramoyl-L-alanine + ADP + phosphate + H(+). It functions in the pathway cell wall biogenesis; peptidoglycan biosynthesis. Functionally, cell wall formation. This chain is UDP-N-acetylmuramate--L-alanine ligase, found in Legionella pneumophila (strain Lens).